A 178-amino-acid polypeptide reads, in one-letter code: MAPQSNNSTTFVSKTQHYLKVKKPLLERQRRARMNKCLDTLKTLVAEFQGDDAILRMDKAEMLEAALVFMRKQVVKQQAPVSPLPMDSFKNGYMNAVSEISRVMACTPAMSVDVGKTVMTHLGVEFQRMLQADQVQTSVTTSTPRPLSPASSGYHSDNEDSQSAASPKPVEETMWRPW.

Positions 18–73 constitute a bHLH domain; it reads YLKVKKPLLERQRRARMNKCLDTLKTLVAEFQGDDAILRMDKAEMLEAALVFMRKQ. One can recognise an Orange domain in the interval 89–122; the sequence is FKNGYMNAVSEISRVMACTPAMSVDVGKTVMTHL. A compositionally biased stretch (polar residues) spans 135 to 165; the sequence is VQTSVTTSTPRPLSPASSGYHSDNEDSQSAA. The interval 135-178 is disordered; that stretch reads VQTSVTTSTPRPLSPASSGYHSDNEDSQSAASPKPVEETMWRPW. A compositionally biased stretch (basic and acidic residues) spans 169 to 178; that stretch reads PVEETMWRPW. Positions 175–178 match the WRPW motif motif; sequence WRPW.

Transcription repression requires formation of a complex with a corepressor protein (Groucho). Forms homodimers.

Its subcellular location is the nucleus. Its function is as follows. Participates in the control of cell fate choice by uncommitted neuroectodermal cells in the embryo. Transcriptional repressor. Binds DNA on N-box motifs: 5'-CACNAG-3'. This is Enhancer of split m5 protein from Drosophila melanogaster (Fruit fly).